The chain runs to 725 residues: Ribonuclease Y (725 aa).

Residues Val4–Ala24 traverse the membrane as a helical segment. 3 disordered regions span residues Asp62–Thr140, Val165–Arg195, and Glu300–Glu321. Composition is skewed to low complexity over residues Asp84–Gly100 and Ala114–Ala137. Positions Val415–Asp481 constitute a KH domain. The region spanning Val541–Gly634 is the HD domain.

This sequence belongs to the RNase Y family.

The protein localises to the cell membrane. Endoribonuclease that initiates mRNA decay. This is Ribonuclease Y from Frankia alni (strain DSM 45986 / CECT 9034 / ACN14a).